We begin with the raw amino-acid sequence, 295 residues long: Pyrroline-5-carboxylate reductase (295 aa).

It belongs to the pyrroline-5-carboxylate reductase family.

Its subcellular location is the cytoplasm. The catalysed reaction is L-proline + NADP(+) = (S)-1-pyrroline-5-carboxylate + NADPH + 2 H(+). The enzyme catalyses L-proline + NAD(+) = (S)-1-pyrroline-5-carboxylate + NADH + 2 H(+). It functions in the pathway amino-acid biosynthesis; L-proline biosynthesis; L-proline from L-glutamate 5-semialdehyde: step 1/1. Functionally, catalyzes the reduction of 1-pyrroline-5-carboxylate (PCA) to L-proline. This Mycobacterium tuberculosis (strain CDC 1551 / Oshkosh) protein is Pyrroline-5-carboxylate reductase.